The following is a 135-amino-acid chain: Large ribosomal subunit protein eL32 (135 aa).

The disordered stretch occupies residues 51–77; that stretch reads GRDNKFRLKMKGKPRPPEPGYRSPRKV.

It belongs to the eukaryotic ribosomal protein eL32 family.

The sequence is that of Large ribosomal subunit protein eL32 (rpl32e) from Nanoarchaeum equitans (strain Kin4-M).